Reading from the N-terminus, the 179-residue chain is UPF0303 protein P4H10.12 (179 aa).

Belongs to the UPF0303 family.

The polypeptide is UPF0303 protein P4H10.12 (Schizosaccharomyces pombe (strain 972 / ATCC 24843) (Fission yeast)).